A 160-amino-acid polypeptide reads, in one-letter code: Transcriptional repressor NrdR (160 aa).

Positions 1-11 are enriched in polar residues; the sequence is MRCPSCNSLDT. Residues 1–20 form a disordered region; that stretch reads MRCPSCNSLDTQVKDSRPTE. The segment at 3–34 is a zinc-finger region; it reads CPSCNSLDTQVKDSRPTEDSAVIRRRRVCMAC. An ATP-cone domain is found at 49-139; the sequence is LTVIKRNGRR…VYRNFREAKD (91 aa).

The protein belongs to the NrdR family. It depends on Zn(2+) as a cofactor.

Its function is as follows. Negatively regulates transcription of bacterial ribonucleotide reductase nrd genes and operons by binding to NrdR-boxes. The polypeptide is Transcriptional repressor NrdR (Nitrobacter hamburgensis (strain DSM 10229 / NCIMB 13809 / X14)).